Reading from the N-terminus, the 1221-residue chain is RNA exonuclease 1 homolog (1221 aa).

The span at R37–G46 shows a compositional bias: gly residues. Residues R37–L75 form a disordered region. A coiled-coil region spans residues L86–T115. The disordered stretch occupies residues T116–D598. R191 carries the post-translational modification Omega-N-methylarginine. Phosphoserine is present on residues S287, S289, and S358. A compositionally biased stretch (low complexity) spans A357–G369. A compositionally biased stretch (basic and acidic residues) spans A393–G417. Phosphoserine occurs at positions 459, 499, and 526. The span at L492–D501 shows a compositional bias: basic and acidic residues. Positions R498 to S577 are interaction with ELOA. A compositionally biased stretch (low complexity) spans P580 to A593. S610 is subject to Phosphoserine. 2 disordered regions span residues I619 to E692 and H735 to L775. Over residues K627–G648 the composition is skewed to basic and acidic residues. A Phosphoserine modification is found at S914. Residues I1060 to V1209 form the Exonuclease domain.

The protein belongs to the REXO1/REXO3 family. Interacts with TCEA2 and ELOA. As to expression, ubiquitously expressed.

Its subcellular location is the nucleus. Seems to have no detectable effect on transcription elongation in vitro. The polypeptide is RNA exonuclease 1 homolog (REXO1) (Homo sapiens (Human)).